The following is a 126-amino-acid chain: Large ribosomal subunit protein bL12 (126 aa).

Over residues 107–116 (EDAEKAKSQL) the composition is skewed to basic and acidic residues. The segment at 107 to 126 (EDAEKAKSQLEEAGATVELK) is disordered.

Belongs to the bacterial ribosomal protein bL12 family. Homodimer. Part of the ribosomal stalk of the 50S ribosomal subunit. Forms a multimeric L10(L12)X complex, where L10 forms an elongated spine to which 2 to 4 L12 dimers bind in a sequential fashion. Binds GTP-bound translation factors.

Its function is as follows. Forms part of the ribosomal stalk which helps the ribosome interact with GTP-bound translation factors. Is thus essential for accurate translation. This Bifidobacterium adolescentis (strain ATCC 15703 / DSM 20083 / NCTC 11814 / E194a) protein is Large ribosomal subunit protein bL12.